Consider the following 318-residue polypeptide: D-alanine--D-alanine ligase (318 aa).

The 200-residue stretch at 116 to 315 folds into the ATP-grasp domain; it reads KQVWQSLGLP…FEQLSLAVLA (200 aa). 146-201 is a binding site for ATP; the sequence is MSRLGDLVMVKPAQEGSSIGMAKVSNAQQLAAAIQQAFEYDDKVLLEQFIQGSEYT. Residues Asp-269, Glu-282, and Asn-284 each coordinate Mg(2+).

This sequence belongs to the D-alanine--D-alanine ligase family. Mg(2+) serves as cofactor. The cofactor is Mn(2+).

The protein resides in the cytoplasm. The catalysed reaction is 2 D-alanine + ATP = D-alanyl-D-alanine + ADP + phosphate + H(+). The protein operates within cell wall biogenesis; peptidoglycan biosynthesis. In terms of biological role, cell wall formation. This Pseudoalteromonas atlantica (strain T6c / ATCC BAA-1087) protein is D-alanine--D-alanine ligase.